The following is a 694-amino-acid chain: Follicle-stimulating hormone receptor (694 aa).

The signal sequence occupies residues 1–17 (MALLLVSLLAFLGSGAG). Disulfide bonds link C18–C25 and C23–C32. Residues 18–46 (CHHWLCHCSDRVFLCQDSKVTEIPPDLPR) enclose the LRRNT domain. The Extracellular portion of the chain corresponds to 18-365 (CHHWLCHCSD…EDIMGYNILR (348 aa)). LRR repeat units lie at residues 49–72 (IELR…FKDL), 73–97 (EKIE…LPKL), 98–118 (HEIR…AFQN), 119–143 (LPNL…KIQS), 144–169 (LQKV…MGLS), 170–192 (FDSL…AFNG), 193–216 (TQLD…VFRG), 217–240 (ASGP…GLEN), and 241–259 (LKKL…PSLD). 2 N-linked (GlcNAc...) asparagine glycosylation sites follow: N191 and N199. Cystine bridges form between C275–C345, C276–C292, C276–C355, and C292–C337. Residues N293 and N311 are each glycosylated (N-linked (GlcNAc...) asparagine). A helical membrane pass occupies residues 366-386 (VLIWFISILAITGNITVLVIL). At 387 to 397 (TTSQYKLTVPR) the chain is on the cytoplasmic side. Residues 398–420 (FLMCNLAFADLCIGIYLLPIASV) form a helical membrane-spanning segment. The Extracellular segment spans residues 421 to 442 (DIHTKSQYHNYAIDWQTAVGCD). C441 and C516 are oxidised to a cystine. A helical transmembrane segment spans residues 443–464 (AAGFFTAFASELSVYTLTAIPL). Residues 465–484 (ERWHTITHAMQLERKVQLRH) lie on the Cytoplasmic side of the membrane. Residues 485-507 (AASVMVMGWVFAFAAALLPIFGV) form a helical membrane-spanning segment. The Extracellular portion of the chain corresponds to 508 to 527 (SSYMKVSICLPIDIDSPLSQ). The chain crosses the membrane as a helical span at residues 528-549 (LYVMALLVLNVLAFVVICGCYT). The Cytoplasmic portion of the chain corresponds to 550 to 572 (HIYLTVRNPNIVSSSSDTKIAKR). Residues 573 to 596 (MATLIFTDFLCMAPISLFAISASL) traverse the membrane as a helical segment. Topologically, residues 597–607 (KAPLITVSKAK) are extracellular. A helical transmembrane segment spans residues 608 to 629 (ILLVLFYPINSCANPFLYAIFT). The Cytoplasmic portion of the chain corresponds to 630–694 (KNFRRDFFIL…LVPLSQSAHN (65 aa)).

The protein belongs to the G-protein coupled receptor 1 family. FSH/LSH/TSH subfamily. In terms of assembly, homotrimer. Functions as a homotrimer binding the FSH hormone heterodimer composed of CGA and FSHB. Interacts with ARRB2. Interacts with APPL2; interaction is independent of follicle stimulating hormone stimulation. Post-translationally, N-glycosylated; indirectly required for FSH-binding, possibly via a conformational change that allows high affinity binding of hormone.

The protein localises to the cell membrane. In terms of biological role, g protein-coupled receptor for follitropin, the follicle-stimulating hormone. Through cAMP production activates the downstream PI3K-AKT and ERK1/ERK2 signaling pathways. The polypeptide is Follicle-stimulating hormone receptor (FSHR) (Mesocricetus auratus (Golden hamster)).